Consider the following 248-residue polypeptide: 4-hydroxy-tetrahydrodipicolinate reductase (248 aa).

NAD(+) is bound by residues 9–14, 77–79, and 104–107; these read GAKGRV, GTT, and APNF. Residue histidine 134 is the Proton donor/acceptor of the active site. Residue histidine 135 coordinates (S)-2,3,4,5-tetrahydrodipicolinate. Lysine 138 functions as the Proton donor in the catalytic mechanism. Residue 144-145 participates in (S)-2,3,4,5-tetrahydrodipicolinate binding; sequence GT.

It belongs to the DapB family.

It localises to the cytoplasm. The enzyme catalyses (S)-2,3,4,5-tetrahydrodipicolinate + NAD(+) + H2O = (2S,4S)-4-hydroxy-2,3,4,5-tetrahydrodipicolinate + NADH + H(+). It catalyses the reaction (S)-2,3,4,5-tetrahydrodipicolinate + NADP(+) + H2O = (2S,4S)-4-hydroxy-2,3,4,5-tetrahydrodipicolinate + NADPH + H(+). Its pathway is amino-acid biosynthesis; L-lysine biosynthesis via DAP pathway; (S)-tetrahydrodipicolinate from L-aspartate: step 4/4. Catalyzes the conversion of 4-hydroxy-tetrahydrodipicolinate (HTPA) to tetrahydrodipicolinate. The protein is 4-hydroxy-tetrahydrodipicolinate reductase of Corynebacterium efficiens (strain DSM 44549 / YS-314 / AJ 12310 / JCM 11189 / NBRC 100395).